The following is a 238-amino-acid chain: uncharacterized protein (238 aa).

This is an uncharacterized protein from Ictaluridae (bullhead catfishes).